The sequence spans 232 residues: Large ribosomal subunit protein uL1 (232 aa).

This sequence belongs to the universal ribosomal protein uL1 family. Part of the 50S ribosomal subunit.

Its function is as follows. Binds directly to 23S rRNA. The L1 stalk is quite mobile in the ribosome, and is involved in E site tRNA release. Protein L1 is also a translational repressor protein, it controls the translation of the L11 operon by binding to its mRNA. The protein is Large ribosomal subunit protein uL1 of Thermosipho africanus (strain TCF52B).